A 347-amino-acid polypeptide reads, in one-letter code: 3-isopropylmalate dehydrogenase (347 aa).

Residues arginine 94, arginine 104, arginine 128, and aspartate 219 each contribute to the substrate site. The Mg(2+) site is built by aspartate 219, aspartate 243, and aspartate 247. 279-291 (GSAPDIAGQGKAD) serves as a coordination point for NAD(+).

Belongs to the isocitrate and isopropylmalate dehydrogenases family. LeuB type 2 subfamily. Homodimer. Requires Mg(2+) as cofactor. Mn(2+) is required as a cofactor.

It is found in the cytoplasm. The catalysed reaction is (2R,3S)-3-isopropylmalate + NAD(+) = 4-methyl-2-oxopentanoate + CO2 + NADH. Its pathway is amino-acid biosynthesis; L-leucine biosynthesis; L-leucine from 3-methyl-2-oxobutanoate: step 3/4. Its function is as follows. Catalyzes the oxidation of 3-carboxy-2-hydroxy-4-methylpentanoate (3-isopropylmalate) to 3-carboxy-4-methyl-2-oxopentanoate. The product decarboxylates to 4-methyl-2 oxopentanoate. The chain is 3-isopropylmalate dehydrogenase from Streptomyces avermitilis (strain ATCC 31267 / DSM 46492 / JCM 5070 / NBRC 14893 / NCIMB 12804 / NRRL 8165 / MA-4680).